We begin with the raw amino-acid sequence, 938 residues long: Breast cancer type 2 susceptibility protein homolog (938 aa).

Basic and acidic residues-rich tracts occupy residues 320–339 and 409–425; these read LEPS…ESKI and NSIK…ETPN. Disordered regions lie at residues 320 to 359 and 409 to 434; these read LEPS…TTVL and NSIK…SSHQ. BRCA2 repeat units lie at residues 537-571, 638-672, and 713-747; these read AEPE…EFQY, NEPQ…QSRA, and SETE…EFQA. The segment covering 870-879 has biased composition (polar residues); it reads SSTETSTSCA. The interval 870–938 is disordered; it reads SSTETSTSCA…RRLGLSRSRY (69 aa). Basic and acidic residues predominate over residues 898–915; sequence ADRDLNRSKDCAKNRQDA. Over residues 926–938 the composition is skewed to basic residues; sequence KKSRRLGLSRSRY.

In terms of assembly, interacts with Rad9 and spn-A/Rad51.

The protein resides in the nucleus. Functionally, involved in and required for double-strand break repair by meiotic and mitotic homologous recombination. During meiosis, has a dual role in the repair of meiotic double-stranded breaks and the efficient activation of the meiotic recombination checkpoint. The chain is Breast cancer type 2 susceptibility protein homolog from Drosophila sechellia (Fruit fly).